Reading from the N-terminus, the 452-residue chain is Matrilin-3 (452 aa).

The first 24 residues, 1-24 (MRRALGTLGCCLALLLPLLPAARG), serve as a signal peptide directing secretion. The 176-residue stretch at 54–229 (DLVFIIDSSR…GVIEKLTSKF (176 aa)) folds into the VWFA domain. EGF-like domains follow at residues 235–275 (AANT…RTCS), 276–316 (AVDV…KTCS), 317–357 (AMDV…KTCS), and 358–398 (AVDV…KTCS). 12 disulfides stabilise this stretch: cysteine 239-cysteine 250, cysteine 246-cysteine 259, cysteine 261-cysteine 274, cysteine 280-cysteine 291, cysteine 287-cysteine 300, cysteine 302-cysteine 315, cysteine 321-cysteine 332, cysteine 328-cysteine 341, cysteine 343-cysteine 356, cysteine 362-cysteine 373, cysteine 369-cysteine 382, and cysteine 384-cysteine 397. Asparagine 295 carries an N-linked (GlcNAc...) asparagine glycan. Residues 419–451 (ALQDSVTSRLEALSTKLDEVSQKLQAYQDRQQV) are a coiled coil.

Can form homooligomers (monomers, dimers, trimers and tetramers) and heterooligomers with matrilin-1. In terms of tissue distribution, expression is restricted to cartilaginous tissues.

The protein localises to the secreted. In terms of biological role, major component of the extracellular matrix of cartilage and may play a role in the formation of extracellular filamentous networks. In Gallus gallus (Chicken), this protein is Matrilin-3 (MATN3).